The primary structure comprises 1090 residues: Solute carrier family 38 member 10 (1090 aa).

A run of 10 helical transmembrane segments spans residues 9-31 (WGLI…PFCF), 36-58 (IVLG…MFLV), 84-104 (LVET…YVVI), 123-143 (TVRV…LSLQ), 153-173 (FSAM…LSSL), 229-249 (IFAS…FFGY), 272-292 (MIRV…ILPC), 323-343 (VLTL…PNVE), 345-365 (ILGF…PALI), and 378-398 (VVLW…LSVT). Position 441 is a phosphoserine (Ser441). Basic and acidic residues-rich tracts occupy residues 441 to 454 (SQEK…KEVL), 493 to 508 (EAHR…KVVV), 517 to 528 (PEEKKPPPRLPD), 544 to 560 (ESEK…EGKR), 587 to 596 (PRKEDSRPGN), and 607 to 623 (DSVE…REPA). Disordered regions lie at residues 441 to 675 (SQEK…AGSK), 729 to 831 (EIRQ…IDLR), and 857 to 1037 (KAAP…ELAP). Residues Ser608 and Ser636 each carry the phosphoserine modification. Composition is skewed to basic and acidic residues over residues 654 to 665 (EAAEQREKKEAE), 729 to 744 (EIRQ…KPKP), and 758 to 767 (GQEEEAEHAG). Residue Thr769 is modified to Phosphothreonine. At Ser887 the chain carries Phosphoserine. Over residues 923–936 (RQSGPTKAPVQTQA) the composition is skewed to polar residues. Basic and acidic residues-rich tracts occupy residues 954-973 (PEVR…EQHK), 1004-1013 (ENAKPNRDLK), and 1026-1037 (DLASHPEQELAP).

It belongs to the amino acid/polyamine transporter 2 family. Expressed in neurons, astrocytes and epithelial cells scattered throughout the central nervous system structures including striatum, ependyma, cerebral cortex, hippocampus, hypothalamus, thalamus, pons, and cerebellum (at protein level). Highly expressed in paraventricular hypothalamic nucleus, suprachiasmatic nucleus, anterior hypothalamic area central part, in lateral ventricule and in dorsal 3rd ventricule (at protein level). Expressed in choroid plexus epithelial cells (at protein level).

Its subcellular location is the membrane. It catalyses the reaction L-glutamate(out) = L-glutamate(in). It carries out the reaction L-glutamine(out) = L-glutamine(in). The catalysed reaction is L-alanine(in) = L-alanine(out). The enzyme catalyses L-serine(in) = L-serine(out). It catalyses the reaction L-leucine(in) = L-leucine(out). Functionally, facilitates bidirectional transport of amino acids. May act as a glutamate sensor that regulates glutamate-glutamine cycle and mTOR signaling in the brain. The transport mechanism remains to be elucidated. The chain is Solute carrier family 38 member 10 from Mus musculus (Mouse).